The sequence spans 476 residues: Protein transport protein SEC61 subunit alpha (476 aa).

The Cytoplasmic segment spans residues Met-1–Leu-33. Residues Met-34–Ile-54 form a helical membrane-spanning segment. Over Val-55–Thr-76 the chain is Lumenal. The chain crosses the membrane as a helical span at residues Leu-77–Gly-97. Topologically, residues Thr-98–Lys-119 are cytoplasmic. The helical transmembrane segment at Leu-120–Gly-140 threads the bilayer. Topologically, residues Pro-141 to Gly-146 are lumenal. A helical transmembrane segment spans residues Ala-147–Leu-167. Over Asp-168–Asn-246 the chain is Cytoplasmic. A helical membrane pass occupies residues Leu-247–Ile-267. Residues Pro-268–Thr-361 are Lumenal-facing. Residues Ala-362–Val-382 form a helical membrane-spanning segment. The Cytoplasmic portion of the chain corresponds to Ser-383–Arg-415. The helical transmembrane segment at Ile-416 to Ala-434 threads the bilayer. Residues Ser-435 to Ala-440 are Lumenal-facing. The helical transmembrane segment at Leu-441–Phe-458 threads the bilayer. Residues Glu-459–Gly-476 are Cytoplasmic-facing.

This sequence belongs to the SecY/SEC61-alpha family. In terms of assembly, heterotrimeric complex composed of SEC61-alpha, SEC61-beta and SEC61-gamma.

The protein resides in the endoplasmic reticulum membrane. Its function is as follows. Appears to play a crucial role in the insertion of secretory and membrane polypeptides into the ER. It is required for assembly of membrane and secretory proteins and is essential for cell growth. It interacts with other membrane proteins required for protein translocation. Upon binding to SEC62/63 complex, secretory precursor polypeptides may engage SEC61 to begin membrane penetration event. A cycle of assembly and disassembly of SEC62/63 from SEC61 may govern the activity of the translocase. In Neurospora crassa (strain ATCC 24698 / 74-OR23-1A / CBS 708.71 / DSM 1257 / FGSC 987), this protein is Protein transport protein SEC61 subunit alpha (sec-61).